A 217-amino-acid chain; its full sequence is Phosphoenolpyruvate guanylyltransferase (217 aa).

Residues threonine 150, glycine 165, and serine 168 each coordinate phosphoenolpyruvate.

The protein belongs to the CofC family.

The enzyme catalyses phosphoenolpyruvate + GTP + H(+) = enolpyruvoyl-2-diphospho-5'-guanosine + diphosphate. It functions in the pathway cofactor biosynthesis; coenzyme F420 biosynthesis. Its function is as follows. Guanylyltransferase that catalyzes the activation of phosphoenolpyruvate (PEP) as enolpyruvoyl-2-diphospho-5'-guanosine, via the condensation of PEP with GTP. It is involved in the biosynthesis of coenzyme F420, a hydride carrier cofactor. This chain is Phosphoenolpyruvate guanylyltransferase, found in Mycobacterium ulcerans (strain Agy99).